Consider the following 56-residue polypeptide: Large ribosomal subunit protein bL32 (56 aa).

Over residues Met-1–Trp-20 the composition is skewed to basic residues. The interval Met-1–Val-24 is disordered.

Belongs to the bacterial ribosomal protein bL32 family.

This is Large ribosomal subunit protein bL32 from Frankia casuarinae (strain DSM 45818 / CECT 9043 / HFP020203 / CcI3).